A 505-amino-acid polypeptide reads, in one-letter code: ATP synthase subunit alpha (505 aa).

ATP is bound at residue 171–178 (GDRQTGKT).

It belongs to the ATPase alpha/beta chains family. In terms of assembly, F-type ATPases have 2 components, CF(1) - the catalytic core - and CF(0) - the membrane proton channel. CF(1) has five subunits: alpha(3), beta(3), gamma(1), delta(1), epsilon(1). CF(0) has three main subunits: a(1), b(2) and c(9-12). The alpha and beta chains form an alternating ring which encloses part of the gamma chain. CF(1) is attached to CF(0) by a central stalk formed by the gamma and epsilon chains, while a peripheral stalk is formed by the delta and b chains.

The protein localises to the cell inner membrane. It carries out the reaction ATP + H2O + 4 H(+)(in) = ADP + phosphate + 5 H(+)(out). In terms of biological role, produces ATP from ADP in the presence of a proton gradient across the membrane. The alpha chain is a regulatory subunit. In Nitratiruptor sp. (strain SB155-2), this protein is ATP synthase subunit alpha.